We begin with the raw amino-acid sequence, 359 residues long: UDP-N-acetylglucosamine--N-acetylmuramyl-(pentapeptide) pyrophosphoryl-undecaprenol N-acetylglucosamine transferase (359 aa).

Residues 15–17 (TGG), N127, R166, S191, I245, 264–269 (ALTVSE), and Q290 contribute to the UDP-N-acetyl-alpha-D-glucosamine site.

Belongs to the glycosyltransferase 28 family. MurG subfamily.

It is found in the cell inner membrane. The catalysed reaction is di-trans,octa-cis-undecaprenyl diphospho-N-acetyl-alpha-D-muramoyl-L-alanyl-D-glutamyl-meso-2,6-diaminopimeloyl-D-alanyl-D-alanine + UDP-N-acetyl-alpha-D-glucosamine = di-trans,octa-cis-undecaprenyl diphospho-[N-acetyl-alpha-D-glucosaminyl-(1-&gt;4)]-N-acetyl-alpha-D-muramoyl-L-alanyl-D-glutamyl-meso-2,6-diaminopimeloyl-D-alanyl-D-alanine + UDP + H(+). It participates in cell wall biogenesis; peptidoglycan biosynthesis. Cell wall formation. Catalyzes the transfer of a GlcNAc subunit on undecaprenyl-pyrophosphoryl-MurNAc-pentapeptide (lipid intermediate I) to form undecaprenyl-pyrophosphoryl-MurNAc-(pentapeptide)GlcNAc (lipid intermediate II). In Pseudomonas putida (strain ATCC 700007 / DSM 6899 / JCM 31910 / BCRC 17059 / LMG 24140 / F1), this protein is UDP-N-acetylglucosamine--N-acetylmuramyl-(pentapeptide) pyrophosphoryl-undecaprenol N-acetylglucosamine transferase.